The following is a 260-amino-acid chain: MFDIGLNLTSPQFANDRDDVVARAFAAGVKGLLLTGTNLHESEHAQQLAQGYERCWSTAGVHPHDSSQWTDESAETLYKLAKTEEVVAIGECGLDFNRNFSTPVEQEAAFTAQLAIAAELEMPVFMHCRDAHERFLTLLEPWRDKLPGAVLHCFTGSRQEAVECLNRGLYLGITGWVCDERRGLELRELLPVIPADRLLVETDAPYLLPRDMKPKPASRRNEPAYLGHIVERIAHWRGEERQRLDAQTDENVRRLFGITF.

Residues glutamate 91, histidine 127, and histidine 152 each coordinate a divalent metal cation.

This sequence belongs to the metallo-dependent hydrolases superfamily. TatD-type hydrolase family. TatD subfamily. In terms of assembly, monomer. It depends on Mg(2+) as a cofactor.

The protein localises to the cytoplasm. Functionally, 3'-5' exonuclease that prefers single-stranded DNA and RNA. May play a role in the H(2)O(2)-induced DNA damage repair. The polypeptide is 3'-5' ssDNA/RNA exonuclease TatD (Enterobacter sp. (strain 638)).